The primary structure comprises 561 residues: Putative transport protein YbjL (561 aa).

The next 5 helical transmembrane spans lie at 8 to 28 (LLNG…LCLG), 32 to 52 (LGSI…LLGQ), 66 to 86 (FMLF…SIFF), 94 to 114 (MLAL…GKLF), and 158 to 178 (NLSL…IVGA). RCK C-terminal domains are found at residues 200-288 (RGLD…SFRN) and 292-373 (VFDR…RIGF). 5 helical membrane-spanning segments follow: residues 383 to 403 (LLAF…TFQF), 406 to 426 (FSFG…LGFL), 447 to 467 (FGLM…ISNG), 475 to 495 (MLIA…LFGA), and 540 to 560 (AIAN…WPGL).

The protein belongs to the AAE transporter (TC 2.A.81) family. YbjL subfamily.

It is found in the cell membrane. The sequence is that of Putative transport protein YbjL from Salmonella arizonae (strain ATCC BAA-731 / CDC346-86 / RSK2980).